The chain runs to 313 residues: Ribosomal RNA small subunit methyltransferase H (313 aa).

S-adenosyl-L-methionine is bound by residues 31–33 (GGH), Asp51, Phe77, Asp95, and Gln102.

It belongs to the methyltransferase superfamily. RsmH family.

Its subcellular location is the cytoplasm. The enzyme catalyses cytidine(1402) in 16S rRNA + S-adenosyl-L-methionine = N(4)-methylcytidine(1402) in 16S rRNA + S-adenosyl-L-homocysteine + H(+). Functionally, specifically methylates the N4 position of cytidine in position 1402 (C1402) of 16S rRNA. This Xylella fastidiosa (strain 9a5c) protein is Ribosomal RNA small subunit methyltransferase H.